Reading from the N-terminus, the 515-residue chain is Putative BTB/POZ domain-containing protein At3g49970 (515 aa).

A BTB domain is found at 1–63 (MLEKLSFLLH…CYDISFEINT (63 aa)). Residues 149–409 (DWWADDLAVL…NSDSPAPATA (261 aa)) form the NPH3 domain. The residue at position 350 (Y350) is a Phosphotyrosine. The tract at residues 395–417 (QENLSNSDSPAPATAEKTLSPPE) is disordered. Residues 418–452 (LSSYKNELSKLNRENQYLKLELLKVKMKFKELEKE) adopt a coiled-coil conformation. Positions 494–515 (INPFGLKQGQTKQPKSRRHSIS) are disordered.

The protein belongs to the NPH3 family.

The protein operates within protein modification; protein ubiquitination. May act as a substrate-specific adapter of an E3 ubiquitin-protein ligase complex (CUL3-RBX1-BTB) which mediates the ubiquitination and subsequent proteasomal degradation of target proteins. This is Putative BTB/POZ domain-containing protein At3g49970 from Arabidopsis thaliana (Mouse-ear cress).